The chain runs to 141 residues: Hemoglobin subunit alpha (141 aa).

A Globin domain is found at Val-1–Arg-141. Residue Ser-3 is modified to Phosphoserine. Lys-7 bears the N6-succinyllysine mark. The residue at position 8 (Thr-8) is a Phosphothreonine. Lys-11 carries the N6-succinyllysine modification. Lys-16 is modified (N6-acetyllysine; alternate). Lys-16 bears the N6-succinyllysine; alternate mark. Residue Tyr-24 is modified to Phosphotyrosine. At Ser-35 the chain carries Phosphoserine. Lys-40 is modified (N6-succinyllysine). The residue at position 49 (Ser-49) is a Phosphoserine. Residue His-58 coordinates O2. His-87 is a heme b binding site. Residue Ser-102 is modified to Phosphoserine. Residue Thr-108 is modified to Phosphothreonine. Position 124 is a phosphoserine (Ser-124). A phosphothreonine mark is found at Thr-134 and Thr-137. Phosphoserine is present on Ser-138.

The protein belongs to the globin family. Heterotetramer of two alpha chains and two beta chains. As to expression, red blood cells.

Functionally, involved in oxygen transport from the lung to the various peripheral tissues. Its function is as follows. Hemopressin acts as an antagonist peptide of the cannabinoid receptor CNR1. Hemopressin-binding efficiently blocks cannabinoid receptor CNR1 and subsequent signaling. This Pteronura brasiliensis (Giant otter) protein is Hemoglobin subunit alpha (HBA).